The primary structure comprises 792 residues: MARTHILGFPRIGERRELKFAQEAFWRGDRTEAELRDVAAQLRRRHWQLQADRGLDTVATGDFAYYDQMLSLTALLGALPRRFGLDPARLTLTQYFELARGNREQPAMEMTKWFDTNYHYLVPELDAETTFDGGPAWFFEEADEALALGLRARPVLIGPVTYLWLSKSHVAGFDRLALLPQLLQGYRRILDQLKARGIEWVQIDEPALCLDLEPAWLDAFDTAYAALREAGPKLLLATYFDTAADHAQRAAALPVDGFHIDLVRAPEQLAAWQAALPAHAVLSLGVIDGRNIWRTDLRRVLDTLRPVQAALGERLWLAPSCSLLHVPVSLAHEVRLDVELKSWLAFATEKLDELSVLGRALNQGDAVVAEALAASDAAQASRRASRRVVNPRVQQRLAAVSAGMADRASPFAERIERQRQALQLPLLPTTTIGSFPQTAAIRQTRAAFKRGEIGALEYLERIRAEIAVAVRKQEALGLDVLVHGEAERNDMVEYFGEQLCGYGFTENGWVQSYGSRCVKPPVIYGDVYRPEPMTVDTARYAQSLTERPMKGMLTGPITMLQWSFVRDDQPRATTARQLALAIRDEVCDLEQAGIRVIQIDEPALREGLPLRRADWDAYLDWAVTAFRLSASGVQDQTQIHTHMCYAEFNDILPAIAAMDADVITIETSRSAMELLEGFGDFDYPNEIGPGVYDIHSPRVPSVQAMERLLDRACEVVPPQRLWVNPDCGLKTRGWEETEAALANMVSAARALRARLSARGATTWKRLSKPAAATAAAVPHAGNACTACATHAN.

5-methyltetrahydropteroyltri-L-glutamate contacts are provided by residues 16–19 and lysine 112; that span reads RELK. L-homocysteine-binding positions include 432–434 and glutamate 485; that span reads IGS. Residues 432–434 and glutamate 485 each bind L-methionine; that span reads IGS. 5-methyltetrahydropteroyltri-L-glutamate contacts are provided by residues 516–517 and tryptophan 562; that span reads RC. Aspartate 600 serves as a coordination point for L-homocysteine. Aspartate 600 contributes to the L-methionine binding site. A 5-methyltetrahydropteroyltri-L-glutamate-binding site is contributed by glutamate 606. Zn(2+) contacts are provided by histidine 642, cysteine 644, and glutamate 666. The active-site Proton donor is the histidine 695. Cysteine 727 serves as a coordination point for Zn(2+).

This sequence belongs to the vitamin-B12 independent methionine synthase family. Zn(2+) is required as a cofactor.

It carries out the reaction 5-methyltetrahydropteroyltri-L-glutamate + L-homocysteine = tetrahydropteroyltri-L-glutamate + L-methionine. It functions in the pathway amino-acid biosynthesis; L-methionine biosynthesis via de novo pathway; L-methionine from L-homocysteine (MetE route): step 1/1. Functionally, catalyzes the transfer of a methyl group from 5-methyltetrahydrofolate to homocysteine resulting in methionine formation. This is 5-methyltetrahydropteroyltriglutamate--homocysteine methyltransferase from Cupriavidus necator (strain ATCC 17699 / DSM 428 / KCTC 22496 / NCIMB 10442 / H16 / Stanier 337) (Ralstonia eutropha).